The sequence spans 142 residues: Large ribosomal subunit protein uL11 (142 aa).

This sequence belongs to the universal ribosomal protein uL11 family. As to quaternary structure, part of the ribosomal stalk of the 50S ribosomal subunit. Interacts with L10 and the large rRNA to form the base of the stalk. L10 forms an elongated spine to which L12 dimers bind in a sequential fashion forming a multimeric L10(L12)X complex. In terms of processing, one or more lysine residues are methylated.

In terms of biological role, forms part of the ribosomal stalk which helps the ribosome interact with GTP-bound translation factors. The protein is Large ribosomal subunit protein uL11 of Liberibacter asiaticus (Citrus greening disease).